Consider the following 434-residue polypeptide: Enolase (434 aa).

Q167 contacts (2R)-2-phosphoglycerate. E209 serves as the catalytic Proton donor. The Mg(2+) site is built by D246, E291, and D318. K343, R372, S373, and K394 together coordinate (2R)-2-phosphoglycerate. The active-site Proton acceptor is the K343.

This sequence belongs to the enolase family. In terms of assembly, component of the RNA degradosome, a multiprotein complex involved in RNA processing and mRNA degradation. It depends on Mg(2+) as a cofactor.

The protein localises to the cytoplasm. The protein resides in the secreted. Its subcellular location is the cell surface. It catalyses the reaction (2R)-2-phosphoglycerate = phosphoenolpyruvate + H2O. The protein operates within carbohydrate degradation; glycolysis; pyruvate from D-glyceraldehyde 3-phosphate: step 4/5. Functionally, catalyzes the reversible conversion of 2-phosphoglycerate (2-PG) into phosphoenolpyruvate (PEP). It is essential for the degradation of carbohydrates via glycolysis. The sequence is that of Enolase from Buchnera aphidicola subsp. Schizaphis graminum (strain Sg).